Here is a 395-residue protein sequence, read N- to C-terminus: Probable nitrate/nitrite transporter NarK2 (395 aa).

The next 12 membrane-spanning stretches (helical) occupy residues 8–28 (LVLA…IGPL), 45–65 (LLVA…GPLT), 72–92 (AMLI…GVAA), 98–118 (ALLV…AVGI), 131–151 (GFST…AFFT), 157–177 (WFGL…TAVV), 205–225 (LPVT…FVAF), 244–266 (AGAR…GWLS), 274–294 (VVLA…LQPP), 301–321 (ATFI…FAWV), 333–353 (VTGI…LVMG), and 365–385 (VGLL…ALHA).

Belongs to the major facilitator superfamily. Nitrate/nitrite porter (TC 2.A.1.8) family.

Its subcellular location is the cell membrane. Its function is as follows. Involved in excretion of nitrite produced by the dissimilatory reduction of nitrate. The sequence is that of Probable nitrate/nitrite transporter NarK2 (narK2) from Mycobacterium tuberculosis (strain CDC 1551 / Oshkosh).